Here is a 396-residue protein sequence, read N- to C-terminus: Phosphoglycerate kinase (396 aa).

Substrate is bound by residues 21–23, R36, 59–62, R118, and R151; these read DLN and HFGR. Residues K201, E323, and 353–356 each bind ATP; that span reads GGDT.

Belongs to the phosphoglycerate kinase family. As to quaternary structure, monomer.

Its subcellular location is the cytoplasm. The catalysed reaction is (2R)-3-phosphoglycerate + ATP = (2R)-3-phospho-glyceroyl phosphate + ADP. The protein operates within carbohydrate degradation; glycolysis; pyruvate from D-glyceraldehyde 3-phosphate: step 2/5. This chain is Phosphoglycerate kinase, found in Brucella melitensis biotype 1 (strain ATCC 23456 / CCUG 17765 / NCTC 10094 / 16M).